A 92-amino-acid chain; its full sequence is Small ribosomal subunit protein bS21A (92 aa).

The segment covering 25-52 (GVFREMKQRRSYEKPSERKTREKSEAIR) has biased composition (basic and acidic residues). The disordered stretch occupies residues 25–92 (GVFREMKQRR…LPQTAARPAG (68 aa)).

This sequence belongs to the bacterial ribosomal protein bS21 family.

This chain is Small ribosomal subunit protein bS21A, found in Bradyrhizobium diazoefficiens (strain JCM 10833 / BCRC 13528 / IAM 13628 / NBRC 14792 / USDA 110).